The sequence spans 579 residues: Glypican-2 (579 aa).

Positions 1–21 (MSALRPLLLLLLHLCPGLGPG) are cleaved as a signal peptide. 3 O-linked (Xyl...) (heparan sulfate) serine glycosylation sites follow: Ser-55, Ser-92, and Ser-155. Disordered regions lie at residues 347-382 (GTPH…PTTA) and 483-552 (ALGQ…GRSR). Residues 361–379 (APREEASRSWRASAEEERP) show a composition bias toward basic and acidic residues. 2 O-linked (Xyl...) (heparan sulfate) serine glycosylation sites follow: Ser-498 and Ser-500. The segment covering 517–527 (VVPPARPPRPP) has biased composition (pro residues). The GPI-anchor amidated serine moiety is linked to residue Ser-556. The propeptide at 557–579 (SVGLHTPLVLLLLPSALTLLVLR) is removed in mature form.

Belongs to the glypican family. As to quaternary structure, interacts (via heparan sulfate) with PTN; this interaction promotes neurite outgrowth through binding of PTN with chondroitin sulfate of proteoglycans, thereby releasing PTPRS of chondroitin sulfate proteoglycans (CSPGs) and leading to binding with heparan sulfate of GPC2. Interacts (heparan sulfate chain) with MDK; this interaction is inhibited by heparin followed by chondroitin sulfate E; this interaction induces GPC2 clustering through heparan sulfate chain; this interaction induces neuronal cell adhesion and neurite outgrowth.

The protein localises to the cell membrane. It is found in the secreted. The protein resides in the extracellular space. In terms of biological role, cell surface proteoglycan that bears heparan sulfate. May fulfill a function related to the motile behaviors of developing neurons. The sequence is that of Glypican-2 (Gpc2) from Mus musculus (Mouse).